Here is a 221-residue protein sequence, read N- to C-terminus: Aspartic protease inhibitor 1 (221 aa).

An N-terminal signal peptide occupies residues 1–23; the sequence is MMKCLFFLCLCLFPILVFSSTFT. Residues 24–32 constitute a propeptide that is removed on maturation; the sequence is SQNPINLPS. The Vacuolar targeting signal motif lies at 26-31; the sequence is NPINLP. An N-linked (GlcNAc...) asparagine glycan is attached at Asn51. Intrachain disulfides connect Cys80-Cys125 and Cys174-Cys186.

This sequence belongs to the protease inhibitor I3 (leguminous Kunitz-type inhibitor) family. In terms of tissue distribution, tubers, young leaves and flower bud. Not detected in root, stem or mature leaves.

The protein resides in the vacuole. In terms of biological role, inhibitor of cathepsin D (aspartic protease). May also inhibit trypsin and chymotrypsin (serine proteases). Protects the plant by inhibiting proteases of invading organisms. The chain is Aspartic protease inhibitor 1 from Solanum tuberosum (Potato).